The following is a 342-amino-acid chain: Epoxide hydrolase srdG (342 aa).

The AB hydrolase-1 domain occupies 44–332; it reads ATVLLLHGWP…LIHTPEEVNK (289 aa). Aspartate 122 serves as the catalytic Nucleophile. Residue histidine 320 is the Proton acceptor of the active site.

Belongs to the AB hydrolase superfamily. Epoxide hydrolase family.

Functionally, highly reducing polyketide synthase; part of the gene cluster that mediates the biosynthesis of sordarial, a salicylic aldehyde structurally related to the phytotoxin pyriculol. The most interesting aspect of this pathway is formation of an aromatic product from the highly reducing polyketide synthase srdA. SrdA synthesizes a reduced polyketide chain from one molecule of acetyl-CoA and five molecules of malonyl-CoA. The polyketide chain is then reductively released as an aldehyde. The oxidoreductases srdC, srdD and srdE then oxidize one of the hydroxy groups to facilitate the intramolecular aldol condensation, followed by dehydration to yield a salicylic aldehyde. This aldehyde can undergo facile reduction by endogenous reductases to yield the alcohol 1-hydroxy-2-hydroxymethyl-3-pent-1,3-dienylbenzene. The flavin-dependent srdI counteract against the propensity of the aldehydes to be reduced under physiological conditions and is responsible for reoxidizing 1-hydroxy-2-hydroxymethyl-3-pent-1,3-dienylbenzene back to the salicylic aldehyde. This salicylic aldehyde is then selectively epoxidized by the cupin-domain-containing oxidoreductase srdB to yield the epoxide, which can be hydrolyzed stereoselectively by the hydrolase srdG to give the final product sordarial. In Neurospora crassa (strain ATCC 24698 / 74-OR23-1A / CBS 708.71 / DSM 1257 / FGSC 987), this protein is Epoxide hydrolase srdG.